Consider the following 226-residue polypeptide: uncharacterized protein (226 aa).

Residues 121–141 (YLIGNIIGLPLTIPFILIPLI) form a helical membrane-spanning segment.

To yeast YDL183c.

It localises to the membrane. This is an uncharacterized protein from Schizosaccharomyces pombe (strain 972 / ATCC 24843) (Fission yeast).